The primary structure comprises 171 residues: PRA1-like protein (171 aa).

3 consecutive transmembrane segments (helical) span residues 67–87, 119–139, and 140–160; these read AIIA…LIVI, VILA…ETII, and WLVG…EPPV.

It belongs to the PRA1 family.

It localises to the membrane. The sequence is that of PRA1-like protein from Schizosaccharomyces pombe (strain 972 / ATCC 24843) (Fission yeast).